A 579-amino-acid polypeptide reads, in one-letter code: Arginine--tRNA ligase (579 aa).

The short motif at 123-133 is the 'HIGH' region element; it reads ANPTGPVHVGR.

This sequence belongs to the class-I aminoacyl-tRNA synthetase family.

The protein resides in the cytoplasm. It carries out the reaction tRNA(Arg) + L-arginine + ATP = L-arginyl-tRNA(Arg) + AMP + diphosphate. The protein is Arginine--tRNA ligase of Haloarcula marismortui (strain ATCC 43049 / DSM 3752 / JCM 8966 / VKM B-1809) (Halobacterium marismortui).